The primary structure comprises 175 residues: Large ribosomal subunit protein uL10 (175 aa).

This sequence belongs to the universal ribosomal protein uL10 family. In terms of assembly, part of the ribosomal stalk of the 50S ribosomal subunit. The N-terminus interacts with L11 and the large rRNA to form the base of the stalk. The C-terminus forms an elongated spine to which L12 dimers bind in a sequential fashion forming a multimeric L10(L12)X complex.

Functionally, forms part of the ribosomal stalk, playing a central role in the interaction of the ribosome with GTP-bound translation factors. The sequence is that of Large ribosomal subunit protein uL10 from Picosynechococcus sp. (strain ATCC 27264 / PCC 7002 / PR-6) (Agmenellum quadruplicatum).